A 204-amino-acid polypeptide reads, in one-letter code: Large ribosomal subunit protein eL15 (204 aa).

The protein belongs to the eukaryotic ribosomal protein eL15 family. As to quaternary structure, component of the large ribosomal subunit.

Its subcellular location is the cytoplasm. Component of the large ribosomal subunit. The ribosome is a large ribonucleoprotein complex responsible for the synthesis of proteins in the cell. The protein is Large ribosomal subunit protein eL15 (rpl15) of Hypophthalmichthys molitrix (Silver carp).